The sequence spans 389 residues: Ankyrin repeat domain-containing protein 42 (389 aa).

Residues Met-1–Ser-21 form a disordered region. Residues Ser-7–Pro-19 are compositionally biased toward polar residues. ANK repeat units lie at residues Val-25–His-60, Arg-64–Ala-93, Arg-97–Val-126, Arg-130–Asp-159, Asn-163–Gln-192, Asn-200–Asp-232, Thr-235–Glu-265, Asn-269–Ile-298, and Ala-302–Asp-332.

The polypeptide is Ankyrin repeat domain-containing protein 42 (ANKRD42) (Homo sapiens (Human)).